A 394-amino-acid chain; its full sequence is Elongation factor Tu (394 aa).

In terms of domain architecture, tr-type G spans 10 to 204; it reads KPHINVGTIG…YLDTYIPEPK (195 aa). A G1 region spans residues 19–26; sequence GHVDHGKT. A GTP-binding site is contributed by 19 to 26; it reads GHVDHGKT. Residue threonine 26 coordinates Mg(2+). Residues 60–64 are G2; the sequence is GITIN. A G3 region spans residues 81 to 84; the sequence is DCPG. GTP is bound by residues 81 to 85 and 136 to 139; these read DCPGH and NKCD. Positions 136–139 are G4; the sequence is NKCD. Residues 174–176 are G5; it reads SAL.

Belongs to the TRAFAC class translation factor GTPase superfamily. Classic translation factor GTPase family. EF-Tu/EF-1A subfamily. As to quaternary structure, monomer.

It is found in the cytoplasm. The enzyme catalyses GTP + H2O = GDP + phosphate + H(+). Functionally, GTP hydrolase that promotes the GTP-dependent binding of aminoacyl-tRNA to the A-site of ribosomes during protein biosynthesis. The protein is Elongation factor Tu of Buchnera aphidicola subsp. Baizongia pistaciae (strain Bp).